The primary structure comprises 58 residues: SPbeta prophage-derived uncharacterized protein YotN (58 aa).

The sequence is that of SPbeta prophage-derived uncharacterized protein YotN (yotN) from Bacillus subtilis (strain 168).